Reading from the N-terminus, the 101-residue chain is Small ribosomal subunit protein uS14 (101 aa).

It belongs to the universal ribosomal protein uS14 family. As to quaternary structure, part of the 30S ribosomal subunit. Contacts proteins S3 and S10.

Functionally, binds 16S rRNA, required for the assembly of 30S particles and may also be responsible for determining the conformation of the 16S rRNA at the A site. The chain is Small ribosomal subunit protein uS14 from Bartonella bacilliformis (strain ATCC 35685 / KC583 / Herrer 020/F12,63).